A 215-amino-acid polypeptide reads, in one-letter code: Cytochrome b6 (215 aa).

Residues 32-52 (IFYCLGGITLVCFLIQFATGF) traverse the membrane as a helical segment. Cys35 contacts heme c. Residues His86 and His100 each contribute to the heme b site. The next 3 helical transmembrane spans lie at 90–110 (ASMM…TGGF), 116–136 (LTWV…VTGY), and 186–206 (AHTF…FLMI). Heme b-binding residues include His187 and His202.

This sequence belongs to the cytochrome b family. PetB subfamily. As to quaternary structure, the 4 large subunits of the cytochrome b6-f complex are cytochrome b6, subunit IV (17 kDa polypeptide, PetD), cytochrome f and the Rieske protein, while the 4 small subunits are PetG, PetL, PetM and PetN. The complex functions as a dimer. Heme b is required as a cofactor. Heme c serves as cofactor.

Its subcellular location is the cellular thylakoid membrane. Functionally, component of the cytochrome b6-f complex, which mediates electron transfer between photosystem II (PSII) and photosystem I (PSI), cyclic electron flow around PSI, and state transitions. This is Cytochrome b6 from Nostoc punctiforme (strain ATCC 29133 / PCC 73102).